The following is a 124-amino-acid chain: Small ribosomal subunit protein uS12 (124 aa).

Aspartate 89 is subject to 3-methylthioaspartic acid.

The protein belongs to the universal ribosomal protein uS12 family. As to quaternary structure, part of the 30S ribosomal subunit. Contacts proteins S8 and S17. May interact with IF1 in the 30S initiation complex.

In terms of biological role, with S4 and S5 plays an important role in translational accuracy. Interacts with and stabilizes bases of the 16S rRNA that are involved in tRNA selection in the A site and with the mRNA backbone. Located at the interface of the 30S and 50S subunits, it traverses the body of the 30S subunit contacting proteins on the other side and probably holding the rRNA structure together. The combined cluster of proteins S8, S12 and S17 appears to hold together the shoulder and platform of the 30S subunit. This Mannheimia succiniciproducens (strain KCTC 0769BP / MBEL55E) protein is Small ribosomal subunit protein uS12.